The primary structure comprises 219 residues: Claudin-3 (219 aa).

Residues 1 to 8 are Cytoplasmic-facing; sequence MSMGLEIT. A helical transmembrane segment spans residues 9–29; sequence GTSLAVLGWLCTIVCCALPMW. Residues 30–80 lie on the Extracellular side of the membrane; sequence RVSAFIGSSIITAQITWEGLWMNCVVQSTGQMQCKMYDSLLALPQDLQAAR. A helical transmembrane segment spans residues 81-101; the sequence is ALIVVSILLAAFGLLVALVGA. Over 102–115 the chain is Cytoplasmic; the sequence is QCTNCVQDETAKAK. Residues 116–136 traverse the membrane as a helical segment; sequence ITIVAGVLFLLAAVLTLVPVS. Residues 137–161 are Extracellular-facing; it reads WSANTIIRDFYNPLVPEAQKREMGT. The helical transmembrane segment at 162 to 182 threads the bilayer; it reads GLYVGWAAAALQLLGGALLCC. Residues 183 to 219 lie on the Cytoplasmic side of the membrane; that stretch reads SCPPREKYAPTKILYSAPRSTGPGTGTGTAYDRKDYV. The residue at position 197 (Tyr197) is a Phosphotyrosine. Ser198 carries the phosphoserine modification. The interactions with TJP1, TJP2 and TJP3 stretch occupies residues 218–219; that stretch reads YV.

It belongs to the claudin family. Can form homo- and heteropolymers with other CLDN. Homopolymers interact with CLDN1 and CLDN2 homopolymers. Interacts in cis (within the same plasma membrane) with CLDN19. Directly interacts with TJP1/ZO-1, TJP2/ZO-2 and TJP3/ZO-3.

Its subcellular location is the cell junction. It is found in the tight junction. It localises to the cell membrane. Plays a major role in tight junction-specific obliteration of the intercellular space, through calcium-independent cell-adhesion activity. This Rattus norvegicus (Rat) protein is Claudin-3 (Cldn3).